We begin with the raw amino-acid sequence, 195 residues long: Imidazoleglycerol-phosphate dehydratase (195 aa).

Belongs to the imidazoleglycerol-phosphate dehydratase family.

The protein localises to the cytoplasm. The enzyme catalyses D-erythro-1-(imidazol-4-yl)glycerol 3-phosphate = 3-(imidazol-4-yl)-2-oxopropyl phosphate + H2O. Its pathway is amino-acid biosynthesis; L-histidine biosynthesis; L-histidine from 5-phospho-alpha-D-ribose 1-diphosphate: step 6/9. This Endomicrobium trichonymphae protein is Imidazoleglycerol-phosphate dehydratase.